A 224-amino-acid polypeptide reads, in one-letter code: 7-cyano-7-deazaguanine synthase (224 aa).

11–21 provides a ligand contact to ATP; that stretch reads FSGGQDSTTCL. Cys-190, Cys-199, Cys-202, and Cys-205 together coordinate Zn(2+).

This sequence belongs to the QueC family. Requires Zn(2+) as cofactor.

The catalysed reaction is 7-carboxy-7-deazaguanine + NH4(+) + ATP = 7-cyano-7-deazaguanine + ADP + phosphate + H2O + H(+). It functions in the pathway purine metabolism; 7-cyano-7-deazaguanine biosynthesis. Functionally, catalyzes the ATP-dependent conversion of 7-carboxy-7-deazaguanine (CDG) to 7-cyano-7-deazaguanine (preQ(0)). The chain is 7-cyano-7-deazaguanine synthase from Parabacteroides distasonis (strain ATCC 8503 / DSM 20701 / CIP 104284 / JCM 5825 / NCTC 11152).